Reading from the N-terminus, the 285-residue chain is Iodotyrosine deiodinase 1 (285 aa).

Residues 1–21 (MFLLTPVLVAVVCILVIWVFK) form a helical membrane-spanning segment. FMN contacts are provided by residues 96–100 (RRSIR) and 124–125 (SG). Alanine 126, glutamate 153, tyrosine 157, and lysine 178 together coordinate 3,5-diiodo-L-tyrosine. 3-iodo-L-tyrosine-binding residues include alanine 126, glutamate 153, tyrosine 157, and lysine 178. FMN-binding positions include 233 to 235 (TTT) and arginine 275.

This sequence belongs to the nitroreductase family. In terms of assembly, homodimer. Requires FMN as cofactor.

Its subcellular location is the cell membrane. It is found in the cytoplasmic vesicle membrane. The catalysed reaction is 2 iodide + L-tyrosine + 2 NADP(+) = 3,5-diiodo-L-tyrosine + 2 NADPH + H(+). The enzyme catalyses iodide + L-tyrosine + NADP(+) = 3-iodo-L-tyrosine + NADPH. It catalyses the reaction 3-iodo-L-tyrosine + iodide + NADP(+) = 3,5-diiodo-L-tyrosine + NADPH + H(+). It carries out the reaction L-tyrosine + chloride + NADP(+) = 3-chloro-L-tyrosine + NADPH. The catalysed reaction is bromide + L-tyrosine + NADP(+) = 3-bromo-L-tyrosine + NADPH. Its function is as follows. Catalyzes the dehalogenation of halotyrosines such as 3-bromo-L-tyrosine, 3-chloro-L-tyrosine, 3-iodo-L-tyrosine and 3,5-diiodo-L-tyrosine. During thyroid hormone biosynthesis, facilitates iodide salvage by catalysing the oxidative NADPH-dependent deiodination of the halogenated by-products of thyroid hormone production, monoiodotyrosine (L-MIT) and diiodotyrosine (L-DIT). The scavanged iodide can then reenter the hormone-producing pathways. Acts more efficiently on 3-iodo-L-tyrosine than 3,5-diiodo-L-tyrosine. The polypeptide is Iodotyrosine deiodinase 1 (Iyd) (Rattus norvegicus (Rat)).